We begin with the raw amino-acid sequence, 1409 residues long: DNA-directed RNA polymerase subunit beta' (1409 aa).

Residues C70, C72, C85, and C88 each contribute to the Zn(2+) site. Positions 461, 463, and 465 each coordinate Mg(2+). C833, C907, C914, and C917 together coordinate Zn(2+). A disordered region spans residues E1389–A1409.

Belongs to the RNA polymerase beta' chain family. The RNAP catalytic core consists of 2 alpha, 1 beta, 1 beta' and 1 omega subunit. When a sigma factor is associated with the core the holoenzyme is formed, which can initiate transcription. Mg(2+) serves as cofactor. Zn(2+) is required as a cofactor.

The enzyme catalyses RNA(n) + a ribonucleoside 5'-triphosphate = RNA(n+1) + diphosphate. In terms of biological role, DNA-dependent RNA polymerase catalyzes the transcription of DNA into RNA using the four ribonucleoside triphosphates as substrates. In Pelobacter propionicus (strain DSM 2379 / NBRC 103807 / OttBd1), this protein is DNA-directed RNA polymerase subunit beta'.